The sequence spans 327 residues: MYQSLMTVRETQIAIKEVKTFFEDQLAKRLELFRVSAPLFVTKKSGLNDHLNGVERPIEFDMLHSGEELEIVHSLAKWKRFALHEYGYEAGEGLYTNMNAIRRDEELDATHSIYVDQWDWEKIVQKEWRTVDYLQKTVLTIYGIFKDLEDHLFEKYPFLGKYLPEEIVFVTSQELEDKYPELTPKDREHAIAKEHGAVFIIGIGDALRSGEKHDGRAADYDDWKLNGDILFWHPVLQSSFELSSMGIRVDSKSXDEQLTKTGEDFKREYDFHKGILEDVLPLTIGGGIGQSRMCMYFLRKAHIGEVQSSVWPDDLREACKKENIHLF.

The protein belongs to the class-II aminoacyl-tRNA synthetase family. AsnA subfamily.

The protein resides in the cytoplasm. The catalysed reaction is L-aspartate + NH4(+) + ATP = L-asparagine + AMP + diphosphate + H(+). The protein operates within amino-acid biosynthesis; L-asparagine biosynthesis; L-asparagine from L-aspartate (ammonia route): step 1/1. In Bacillus cereus (strain AH820), this protein is Aspartate--ammonia ligase.